The sequence spans 354 residues: UDP-N-acetylglucosamine--N-acetylmuramyl-(pentapeptide) pyrophosphoryl-undecaprenol N-acetylglucosamine transferase (354 aa).

Residues threonine 11 to glycine 13, arginine 164, serine 194, and glutamine 289 contribute to the UDP-N-acetyl-alpha-D-glucosamine site.

The protein belongs to the glycosyltransferase 28 family. MurG subfamily.

Its subcellular location is the cell membrane. It catalyses the reaction di-trans,octa-cis-undecaprenyl diphospho-N-acetyl-alpha-D-muramoyl-L-alanyl-D-glutamyl-meso-2,6-diaminopimeloyl-D-alanyl-D-alanine + UDP-N-acetyl-alpha-D-glucosamine = di-trans,octa-cis-undecaprenyl diphospho-[N-acetyl-alpha-D-glucosaminyl-(1-&gt;4)]-N-acetyl-alpha-D-muramoyl-L-alanyl-D-glutamyl-meso-2,6-diaminopimeloyl-D-alanyl-D-alanine + UDP + H(+). Its pathway is cell wall biogenesis; peptidoglycan biosynthesis. Functionally, cell wall formation. Catalyzes the transfer of a GlcNAc subunit on undecaprenyl-pyrophosphoryl-MurNAc-pentapeptide (lipid intermediate I) to form undecaprenyl-pyrophosphoryl-MurNAc-(pentapeptide)GlcNAc (lipid intermediate II). This Lachnospira eligens (strain ATCC 27750 / DSM 3376 / VPI C15-48 / C15-B4) (Eubacterium eligens) protein is UDP-N-acetylglucosamine--N-acetylmuramyl-(pentapeptide) pyrophosphoryl-undecaprenol N-acetylglucosamine transferase.